The sequence spans 267 residues: Putative hydro-lyase RALTA_B1245 (267 aa).

It belongs to the D-glutamate cyclase family.

This chain is Putative hydro-lyase RALTA_B1245, found in Cupriavidus taiwanensis (strain DSM 17343 / BCRC 17206 / CCUG 44338 / CIP 107171 / LMG 19424 / R1) (Ralstonia taiwanensis (strain LMG 19424)).